The primary structure comprises 92 residues: Small ribosomal subunit protein uS19 (92 aa).

The protein belongs to the universal ribosomal protein uS19 family.

Protein S19 forms a complex with S13 that binds strongly to the 16S ribosomal RNA. In Klebsiella pneumoniae (strain 342), this protein is Small ribosomal subunit protein uS19.